A 95-amino-acid chain; its full sequence is Small ribosomal subunit protein uS17 (95 aa).

It belongs to the universal ribosomal protein uS17 family. Part of the 30S ribosomal subunit.

In terms of biological role, one of the primary rRNA binding proteins, it binds specifically to the 5'-end of 16S ribosomal RNA. This Psychrobacter sp. (strain PRwf-1) protein is Small ribosomal subunit protein uS17.